A 149-amino-acid polypeptide reads, in one-letter code: L-alanine exporter AlaE (149 aa).

The next 4 helical transmembrane spans lie at 16–36, 46–66, 85–105, and 112–132; these read FAMV…LSGM, LVAI…RDAI, VLAY…TVGA, and AAVS…GYFL.

This sequence belongs to the AlaE exporter family.

The protein resides in the cell inner membrane. Its function is as follows. Exports L-alanine. The chain is L-alanine exporter AlaE from Citrobacter koseri (strain ATCC BAA-895 / CDC 4225-83 / SGSC4696).